Consider the following 2145-residue polypeptide: U5 small nuclear ribonucleoprotein 200 kDa helicase (2145 aa).

Disordered stretches follow at residues Gly54–Phe82 and Asp202–His243. Residues Ser220–Asp231 are compositionally biased toward acidic residues. Positions Asp484–His667 constitute a Helicase ATP-binding 1 domain. Ala497–Thr504 serves as a coordination point for ATP. Positions Asp609 to His612 match the DEAH box motif. The Helicase C-terminal domain occupies Pro677–Leu894. The SEC63 1 domain occupies Thr975–Ser1278. A Helicase ATP-binding 2 domain is found at Arg1331–Phe1506. Ala1344 to Thr1351 serves as a coordination point for ATP. Positions Asp1448–His1451 match the DEAH box motif. Residues Leu1812–Val2124 form the SEC63 2 domain.

This sequence belongs to the helicase family. SKI2 subfamily.

The protein resides in the nucleus. It carries out the reaction ATP + H2O = ADP + phosphate + H(+). Its function is as follows. Catalyzes the ATP-dependent unwinding of U4/U6 RNA duplices, an essential step in the assembly of a catalytically active spliceosome. Plays a role in pre-mRNA splicing. The polypeptide is U5 small nuclear ribonucleoprotein 200 kDa helicase (Caenorhabditis elegans).